We begin with the raw amino-acid sequence, 341 residues long: Fructose-1,6-bisphosphatase, cytosolic (341 aa).

Positions 71, 100, 121, 123, and 124 each coordinate Mg(2+). Residues Asp-124–Ser-127, Asn-215, Tyr-247, Tyr-267, and Lys-277 each bind substrate. A Mg(2+)-binding site is contributed by Glu-283.

It belongs to the FBPase class 1 family. It depends on Mg(2+) as a cofactor.

The protein resides in the cytoplasm. The catalysed reaction is beta-D-fructose 1,6-bisphosphate + H2O = beta-D-fructose 6-phosphate + phosphate. The sequence is that of Fructose-1,6-bisphosphatase, cytosolic from Beta vulgaris (Sugar beet).